A 213-amino-acid polypeptide reads, in one-letter code: Adenylate kinase (213 aa).

10–15 is an ATP binding site; that stretch reads GAGKGT. Residues 30–59 form an NMP region; sequence STGNLLRDEVKSKTDLGVDIEKLISNGKFV. AMP-binding positions include Thr31, Arg36, 57–59, 85–88, and Gln92; these read KFV and GYPR. The segment at 126 to 162 is LID; it reads GRMTCEKCNMTLNEYFNKEQIELHPCGVEHLKKRKDD. Arg127 is an ATP binding site. The AMP site is built by Arg159 and Arg170. Gly198 provides a ligand contact to ATP.

This sequence belongs to the adenylate kinase family. Monomer.

It localises to the cytoplasm. The catalysed reaction is AMP + ATP = 2 ADP. Its pathway is purine metabolism; AMP biosynthesis via salvage pathway; AMP from ADP: step 1/1. Its function is as follows. Catalyzes the reversible transfer of the terminal phosphate group between ATP and AMP. Plays an important role in cellular energy homeostasis and in adenine nucleotide metabolism. This Pelagibacter ubique (strain HTCC1062) protein is Adenylate kinase.